A 329-amino-acid chain; its full sequence is Phenylalanine--tRNA ligase alpha subunit (329 aa).

The protein belongs to the class-II aminoacyl-tRNA synthetase family. Phe-tRNA synthetase alpha subunit type 1 subfamily. As to quaternary structure, tetramer of two alpha and two beta subunits. Requires Mg(2+) as cofactor.

It localises to the cytoplasm. It carries out the reaction tRNA(Phe) + L-phenylalanine + ATP = L-phenylalanyl-tRNA(Phe) + AMP + diphosphate + H(+). The chain is Phenylalanine--tRNA ligase alpha subunit (pheS) from Buchnera aphidicola subsp. Acyrthosiphon pisum (strain APS) (Acyrthosiphon pisum symbiotic bacterium).